The following is a 943-amino-acid chain: Tyrosine-protein kinase transmembrane receptor ROR2 (943 aa).

The signal sequence occupies residues 1–33 (MARGSALPRRPLLCIPAVWAAAALLLSVSRTSG). Residues 34-403 (EVEVLDPNDP…CSPRDSSKMG (370 aa)) lie on the Extracellular side of the membrane. One can recognise an Ig-like C2-type domain in the interval 55–145 (PTLKGYFLNF…VATNGMKTIT (91 aa)). The N-linked (GlcNAc...) asparagine glycan is linked to Asn70. Disulfide bonds link Cys83/Cys135, Cys174/Cys239, Cys182/Cys232, Cys223/Cys264, Cys252/Cys300, Cys256/Cys286, Cys316/Cys394, Cys337/Cys377, and Cys365/Cys389. Positions 169 to 303 (HEDGFCQPYR…SPDAANCMRI (135 aa)) constitute an FZ domain. Asn188 is a glycosylation site (N-linked (GlcNAc...) asparagine). The 79-residue stretch at 316 to 394 (CYNGSGMDYR…RMELCDVPSC (79 aa)) folds into the Kringle domain. Asn318 carries N-linked (GlcNAc...) asparagine glycosylation. Residues 404–424 (ILYILVPSIAIPLVIACLFFL) traverse the membrane as a helical segment. At 425-943 (VCMCRNKQKA…VDEAQVQLEA (519 aa)) the chain is on the cytoplasmic side. Residues Ser469 and Ser471 each carry the sulfoserine; partial modification. Residues 473–746 (VRFMEELGED…PRFKDIHSRL (274 aa)) enclose the Protein kinase domain. ATP contacts are provided by residues 479 to 487 (LGEDRFGKV) and Lys507. Catalysis depends on Asp615, which acts as the Proton acceptor. Tyr646 bears the Phosphotyrosine; by autocatalysis mark. Disordered regions lie at residues 757-796 (SSAQ…APPF) and 850-931 (QVPP…DCDT). Composition is skewed to low complexity over residues 765-791 (SNTT…GPKQ) and 857-872 (PKPS…TSTG). An Asymmetric dimethylarginine modification is found at Arg785. The segment covering 873–883 (YVTTAPSNTSM) has biased composition (polar residues).

Belongs to the protein kinase superfamily. Tyr protein kinase family. ROR subfamily. As to quaternary structure, homodimer; promotes osteogenesis. Binds YWHAB. Interacts with WTIP. Interacts with ROR2. Requires Mg(2+) as cofactor.

Its subcellular location is the cell membrane. The enzyme catalyses L-tyrosyl-[protein] + ATP = O-phospho-L-tyrosyl-[protein] + ADP + H(+). Tyrosine-protein kinase receptor which may be involved in the early formation of the chondrocytes. It seems to be required for cartilage and growth plate development. Phosphorylates YWHAB, leading to induction of osteogenesis and bone formation. In contrast, has also been shown to have very little tyrosine kinase activity in vitro. May act as a receptor for wnt ligand WNT5A which may result in the inhibition of WNT3A-mediated signaling. The chain is Tyrosine-protein kinase transmembrane receptor ROR2 (ROR2) from Homo sapiens (Human).